The sequence spans 186 residues: Adenylyl-sulfate kinase (186 aa).

17–24 (GLSGAGKT) serves as a coordination point for ATP. Residue S91 is the Phosphoserine intermediate of the active site.

Belongs to the APS kinase family.

The catalysed reaction is adenosine 5'-phosphosulfate + ATP = 3'-phosphoadenylyl sulfate + ADP + H(+). It participates in sulfur metabolism; hydrogen sulfide biosynthesis; sulfite from sulfate: step 2/3. Catalyzes the synthesis of activated sulfate. This Chloroflexus aurantiacus (strain ATCC 29364 / DSM 637 / Y-400-fl) protein is Adenylyl-sulfate kinase.